The following is a 346-amino-acid chain: tRNA N6-adenosine threonylcarbamoyltransferase (346 aa).

Fe cation-binding residues include His111 and His115. Substrate contacts are provided by residues 134–138 (LVSGG), Asp167, Gly180, and Asn279. Asp307 is a binding site for Fe cation.

It belongs to the KAE1 / TsaD family. Requires Fe(2+) as cofactor.

The protein resides in the cytoplasm. The catalysed reaction is L-threonylcarbamoyladenylate + adenosine(37) in tRNA = N(6)-L-threonylcarbamoyladenosine(37) in tRNA + AMP + H(+). Functionally, required for the formation of a threonylcarbamoyl group on adenosine at position 37 (t(6)A37) in tRNAs that read codons beginning with adenine. Is involved in the transfer of the threonylcarbamoyl moiety of threonylcarbamoyl-AMP (TC-AMP) to the N6 group of A37, together with TsaE and TsaB. TsaD likely plays a direct catalytic role in this reaction. This is tRNA N6-adenosine threonylcarbamoyltransferase from Burkholderia mallei (strain ATCC 23344).